A 407-amino-acid polypeptide reads, in one-letter code: 1-deoxy-D-xylulose 5-phosphate reductoisomerase (407 aa).

Residues Thr10, Gly11, Ser12, Ile13, Gly36, and Asn131 each coordinate NADPH. Lys132 is a binding site for 1-deoxy-D-xylulose 5-phosphate. Residue Glu133 participates in NADPH binding. Asp155 lines the Mn(2+) pocket. 1-deoxy-D-xylulose 5-phosphate is bound by residues Ser156, Glu157, Ser181, and His204. Glu157 lines the Mn(2+) pocket. Gly210 is a binding site for NADPH. 1-deoxy-D-xylulose 5-phosphate-binding residues include Ser217, Asn222, Lys223, and Glu226. Residue Glu226 coordinates Mn(2+).

This sequence belongs to the DXR family. It depends on Mg(2+) as a cofactor. The cofactor is Mn(2+).

It carries out the reaction 2-C-methyl-D-erythritol 4-phosphate + NADP(+) = 1-deoxy-D-xylulose 5-phosphate + NADPH + H(+). It functions in the pathway isoprenoid biosynthesis; isopentenyl diphosphate biosynthesis via DXP pathway; isopentenyl diphosphate from 1-deoxy-D-xylulose 5-phosphate: step 1/6. Catalyzes the NADPH-dependent rearrangement and reduction of 1-deoxy-D-xylulose-5-phosphate (DXP) to 2-C-methyl-D-erythritol 4-phosphate (MEP). The protein is 1-deoxy-D-xylulose 5-phosphate reductoisomerase of Cutibacterium acnes (strain DSM 16379 / KPA171202) (Propionibacterium acnes).